Consider the following 465-residue polypeptide: Crh-like protein ARB_05253 (465 aa).

Residues 1 to 21 (MKLSLAAALLGALAVSAQTST) form the signal peptide. The region spanning 22 to 223 (ECNPLKQKCP…WAGGETDFSK (202 aa)) is the GH16 domain. A disulfide bond links C23 and C30. The active-site Nucleophile is the E114. Catalysis depends on E118, which acts as the Proton donor. Chitin is bound by residues E118, W200, and T211. Disordered regions lie at residues 261–325 (GQVN…STMT) and 339–442 (TGTG…PGST). The N-linked (GlcNAc...) asparagine glycan is linked to N264. Residues 277 to 287 (SSTLPSSPSTS) show a composition bias toward low complexity. A compositionally biased stretch (polar residues) spans 304–325 (QAPNTGSSPSNTLTNGPSSTMT). 3 stretches are compositionally biased toward low complexity: residues 339–348 (TGTGGVVTPT), 361–376 (TSRSSRSVSSSVSASS), and 383–397 (MTTSTGSGSAPTGTG). A lipid anchor (GPI-anchor amidated serine) is attached at S441. Positions 442 to 465 (TGAIHSVSNALLLSFCAIAAWALV) are cleaved as a propeptide — removed in mature form.

Belongs to the glycosyl hydrolase 16 family. CRH1 subfamily. In terms of processing, the GPI-anchor is attached to the protein in the endoplasmic reticulum and serves to target the protein to the cell surface. There, the glucosamine-inositol phospholipid moiety is cleaved off and the GPI-modified mannoprotein is covalently attached via its lipidless GPI glycan remnant to the 1,6-beta-glucan of the outer cell wall layer.

Its subcellular location is the secreted. It localises to the cell wall. The protein localises to the membrane. The enzyme catalyses Random endo-hydrolysis of N-acetyl-beta-D-glucosaminide (1-&gt;4)-beta-linkages in chitin and chitodextrins.. Functionally, dual chitinase/transglycosylase that plays a role in cell wall architecture. Chitinase and transglycosylase activities are coupled. Required for the polysaccharide cross-linking at the septa and the cell wall. More specifically, transfers chitin to 1,6-beta-glucan in the cell wall. This is Crh-like protein ARB_05253 from Arthroderma benhamiae (strain ATCC MYA-4681 / CBS 112371) (Trichophyton mentagrophytes).